Here is a 178-residue protein sequence, read N- to C-terminus: Crossover junction endodeoxyribonuclease RuvC (178 aa).

Catalysis depends on residues Asp-8, Glu-72, and Asp-144. The Mg(2+) site is built by Asp-8, Glu-72, and Asp-144.

The protein belongs to the RuvC family. As to quaternary structure, homodimer which binds Holliday junction (HJ) DNA. The HJ becomes 2-fold symmetrical on binding to RuvC with unstacked arms; it has a different conformation from HJ DNA in complex with RuvA. In the full resolvosome a probable DNA-RuvA(4)-RuvB(12)-RuvC(2) complex forms which resolves the HJ. Mg(2+) is required as a cofactor.

The protein resides in the cytoplasm. It carries out the reaction Endonucleolytic cleavage at a junction such as a reciprocal single-stranded crossover between two homologous DNA duplexes (Holliday junction).. Functionally, the RuvA-RuvB-RuvC complex processes Holliday junction (HJ) DNA during genetic recombination and DNA repair. Endonuclease that resolves HJ intermediates. Cleaves cruciform DNA by making single-stranded nicks across the HJ at symmetrical positions within the homologous arms, yielding a 5'-phosphate and a 3'-hydroxyl group; requires a central core of homology in the junction. The consensus cleavage sequence is 5'-(A/T)TT(C/G)-3'. Cleavage occurs on the 3'-side of the TT dinucleotide at the point of strand exchange. HJ branch migration catalyzed by RuvA-RuvB allows RuvC to scan DNA until it finds its consensus sequence, where it cleaves and resolves the cruciform DNA. In Idiomarina loihiensis (strain ATCC BAA-735 / DSM 15497 / L2-TR), this protein is Crossover junction endodeoxyribonuclease RuvC.